Here is a 176-residue protein sequence, read N- to C-terminus: ATP-dependent protease subunit HslV (176 aa).

T5 is a catalytic residue. Positions 161, 164, and 167 each coordinate Na(+).

Belongs to the peptidase T1B family. HslV subfamily. In terms of assembly, a double ring-shaped homohexamer of HslV is capped on each side by a ring-shaped HslU homohexamer. The assembly of the HslU/HslV complex is dependent on binding of ATP.

The protein resides in the cytoplasm. The catalysed reaction is ATP-dependent cleavage of peptide bonds with broad specificity.. With respect to regulation, allosterically activated by HslU binding. Protease subunit of a proteasome-like degradation complex believed to be a general protein degrading machinery. This is ATP-dependent protease subunit HslV from Sulfurovum sp. (strain NBC37-1).